The primary structure comprises 360 residues: UDP-3-O-acylglucosamine N-acyltransferase (360 aa).

The active-site Proton acceptor is the histidine 253.

It belongs to the transferase hexapeptide repeat family. LpxD subfamily. As to quaternary structure, homotrimer.

The enzyme catalyses a UDP-3-O-[(3R)-3-hydroxyacyl]-alpha-D-glucosamine + a (3R)-hydroxyacyl-[ACP] = a UDP-2-N,3-O-bis[(3R)-3-hydroxyacyl]-alpha-D-glucosamine + holo-[ACP] + H(+). The protein operates within bacterial outer membrane biogenesis; LPS lipid A biosynthesis. Its function is as follows. Catalyzes the N-acylation of UDP-3-O-acylglucosamine using 3-hydroxyacyl-ACP as the acyl donor. Is involved in the biosynthesis of lipid A, a phosphorylated glycolipid that anchors the lipopolysaccharide to the outer membrane of the cell. This is UDP-3-O-acylglucosamine N-acyltransferase from Burkholderia multivorans (strain ATCC 17616 / 249).